The primary structure comprises 2752 residues: Protein PFF0380w (2752 aa).

The segment covering 20 to 30 (EREKEEEEKKR) has biased composition (basic and acidic residues). Disordered regions lie at residues 20 to 44 (EREK…NNYN), 139 to 160 (HIHK…NNDY), 634 to 678 (NDIV…INMK), 1048 to 1130 (DKKS…SGEN), and 1153 to 1172 (ENLQ…NNNG). Over residues 32–44 (YNISNNNNNNNYN) the composition is skewed to low complexity. Basic and acidic residues predominate over residues 142-157 (KNNDINNIHEKNDKSN). Residues 640 to 674 (NNNNNNNNNNNNNNNNNNNNNNNNNNNNNNNNNNN) show a composition bias toward low complexity. Residues 1048 to 1060 (DKKSEDMKEDTPT) are compositionally biased toward basic and acidic residues. Polar residues predominate over residues 1061 to 1075 (RGENLQRGQNLQRGD). Basic and acidic residues predominate over residues 1076–1090 (NLQRGDNLQRGDNLQ). The segment covering 1091 to 1130 (RGDNLQNGDNLQNGDNLQRGDNLQNGENLQSGENLQSGEN) has biased composition (polar residues). The segment covering 1162-1172 (NNILYPYNNNG) has biased composition (low complexity). Residues 1277-1354 (TLEEVLEIIS…LHRTHIQHKK (78 aa)) form the HTH OST-type domain. 4 disordered regions span residues 1457-1499 (DIKQ…NNIS), 1958-1999 (AKNS…YYML), 2063-2099 (KRKN…NNDK), and 2501-2537 (DENN…FLHN). Low complexity-rich tracts occupy residues 1469–1499 (NNIN…NNIS) and 1962–1975 (NQEN…NYNN). Residues 1976–1994 (NDDDDDNNNNNNDDDDDDN) show a composition bias toward acidic residues. Low complexity-rich tracts occupy residues 2068-2095 (NIHN…NNDN) and 2501-2526 (DENN…VLHN).

The polypeptide is Protein PFF0380w (Plasmodium falciparum (isolate 3D7)).